The chain runs to 177 residues: Large ribosomal subunit protein uL6 (177 aa).

Over residues 152–171 (RPPEPYKGKGVRYDDEEVRR) the composition is skewed to basic and acidic residues. The interval 152–177 (RPPEPYKGKGVRYDDEEVRRKEAKKK) is disordered.

It belongs to the universal ribosomal protein uL6 family. As to quaternary structure, part of the 50S ribosomal subunit.

Functionally, this protein binds to the 23S rRNA, and is important in its secondary structure. It is located near the subunit interface in the base of the L7/L12 stalk, and near the tRNA binding site of the peptidyltransferase center. This Shewanella oneidensis (strain ATCC 700550 / JCM 31522 / CIP 106686 / LMG 19005 / NCIMB 14063 / MR-1) protein is Large ribosomal subunit protein uL6.